A 272-amino-acid polypeptide reads, in one-letter code: 3-methyl-2-oxobutanoate hydroxymethyltransferase (272 aa).

Mg(2+)-binding residues include Asp42 and Asp86. 3-methyl-2-oxobutanoate contacts are provided by residues 42–43 (DS), Asp86, and Lys116. Glu118 provides a ligand contact to Mg(2+). Glu185 serves as the catalytic Proton acceptor.

The protein belongs to the PanB family. As to quaternary structure, homodecamer; pentamer of dimers. Requires Mg(2+) as cofactor.

It is found in the cytoplasm. It carries out the reaction 3-methyl-2-oxobutanoate + (6R)-5,10-methylene-5,6,7,8-tetrahydrofolate + H2O = 2-dehydropantoate + (6S)-5,6,7,8-tetrahydrofolate. The protein operates within cofactor biosynthesis; (R)-pantothenate biosynthesis; (R)-pantoate from 3-methyl-2-oxobutanoate: step 1/2. In terms of biological role, catalyzes the reversible reaction in which hydroxymethyl group from 5,10-methylenetetrahydrofolate is transferred onto alpha-ketoisovalerate to form ketopantoate. This is 3-methyl-2-oxobutanoate hydroxymethyltransferase from Prochlorococcus marinus (strain NATL1A).